The chain runs to 260 residues: Adenosylcobinamide-GDP ribazoletransferase (260 aa).

7 helical membrane passes run 31 to 51 (FYFL…PIYF), 57 to 77 (IEIS…SIHL), 108 to 128 (YGTI…STII), 131 to 151 (AGLL…VVVF), 173 to 193 (FFFW…IAAF), 206 to 226 (LKYL…IRIS), and 240 to 260 (LIVE…NVHL).

It belongs to the CobS family. The cofactor is Mg(2+).

The protein localises to the cell inner membrane. The enzyme catalyses alpha-ribazole + adenosylcob(III)inamide-GDP = adenosylcob(III)alamin + GMP + H(+). It carries out the reaction alpha-ribazole 5'-phosphate + adenosylcob(III)inamide-GDP = adenosylcob(III)alamin 5'-phosphate + GMP + H(+). It functions in the pathway cofactor biosynthesis; adenosylcobalamin biosynthesis; adenosylcobalamin from cob(II)yrinate a,c-diamide: step 7/7. Joins adenosylcobinamide-GDP and alpha-ribazole to generate adenosylcobalamin (Ado-cobalamin). Also synthesizes adenosylcobalamin 5'-phosphate from adenosylcobinamide-GDP and alpha-ribazole 5'-phosphate. The sequence is that of Adenosylcobinamide-GDP ribazoletransferase from Treponema denticola (strain ATCC 35405 / DSM 14222 / CIP 103919 / JCM 8153 / KCTC 15104).